Here is a 785-residue protein sequence, read N- to C-terminus: Endonuclease MutS2 (785 aa).

335–342 serves as a coordination point for ATP; that stretch reads GPNTGGKT. In terms of domain architecture, Smr spans 710–785; it reads LDLRGERYED…GNGVTIVEFK (76 aa).

It belongs to the DNA mismatch repair MutS family. MutS2 subfamily. As to quaternary structure, homodimer. Binds to stalled ribosomes, contacting rRNA.

Its function is as follows. Endonuclease that is involved in the suppression of homologous recombination and thus may have a key role in the control of bacterial genetic diversity. In terms of biological role, acts as a ribosome collision sensor, splitting the ribosome into its 2 subunits. Detects stalled/collided 70S ribosomes which it binds and splits by an ATP-hydrolysis driven conformational change. Acts upstream of the ribosome quality control system (RQC), a ribosome-associated complex that mediates the extraction of incompletely synthesized nascent chains from stalled ribosomes and their subsequent degradation. Probably generates substrates for RQC. The polypeptide is Endonuclease MutS2 (Listeria monocytogenes serotype 4b (strain CLIP80459)).